Consider the following 486-residue polypeptide: Photosystem II CP43 reaction center protein (486 aa).

Residues 1 to 28 (MKVFVHGWQHKISHTRILYSLRRFYHVE) constitute a propeptide that is removed on maturation. 5 helical membrane-spanning segments follow: residues 82 to 106 (LFEV…PHLA), 147 to 168 (LIGP…RDKN), 191 to 213 (KALF…RLIN), 268 to 288 (KPFA…LSYS), and 304 to 325 (WYNN…ASQA). Glutamate 380 provides a ligand contact to [CaMn4O5] cluster. Residues 460 to 484 (RARAAAAGFEKGINRENEAVLSMRP) traverse the membrane as a helical segment.

The protein belongs to the PsbB/PsbC family. PsbC subfamily. As to quaternary structure, PSII is composed of 1 copy each of membrane proteins PsbA, PsbB, PsbC, PsbD, PsbE, PsbF, PsbH, PsbI, PsbJ, PsbK, PsbL, PsbM, PsbT, PsbX, PsbY, PsbZ, Psb30/Ycf12, at least 3 peripheral proteins of the oxygen-evolving complex and a large number of cofactors. It forms dimeric complexes. Requires Binds multiple chlorophylls and provides some of the ligands for the Ca-4Mn-5O cluster of the oxygen-evolving complex. It may also provide a ligand for a Cl- that is required for oxygen evolution. PSII binds additional chlorophylls, carotenoids and specific lipids. as cofactor.

It localises to the plastid. It is found in the chloroplast thylakoid membrane. Functionally, one of the components of the core complex of photosystem II (PSII). It binds chlorophyll and helps catalyze the primary light-induced photochemical processes of PSII. PSII is a light-driven water:plastoquinone oxidoreductase, using light energy to abstract electrons from H(2)O, generating O(2) and a proton gradient subsequently used for ATP formation. The protein is Photosystem II CP43 reaction center protein of Gracilaria tenuistipitata var. liui (Red alga).